The sequence spans 193 residues: uncharacterized protein (193 aa).

Residues 119 to 143 (LAGSLLAATGMTLGIFGMGITGTCW) traverse the membrane as a helical segment.

It is found in the mitochondrion membrane. This is an uncharacterized protein from Saccharomyces cerevisiae (strain ATCC 204508 / S288c) (Baker's yeast).